The following is a 503-amino-acid chain: MNSAIMQGAAMATSHGIARLNRHNAQRNHFHIPTANRLFYQLQTPCTSTEEERRTVQTDDVAEIGMQRPDYQMYCGEEEISEQFVKLNVGGQRFMLRKDTIRRRGVGRLLDLINKPVADSNADAFFSSTSEFYFERPPSLFHIVYQFYLNGVIHQPSNLCPVDIIEELEYWRIIPDQYLASCCCAQQIDDDDEEVEEQDKPNLFKTLRFGEIRRCVWNIIEEPASSGKAQAFAVCSVVFVLISISGLVLGSLPELQVATKQRNNLTGEEFTEMEPMPILGYIEYVCIVWFTMEYGLKMLVSAERSKTFRQLLNIIDLLAILPFIIEMLLLIFGISTEQLRDLKGAFLVIRILRVLRVIRVLKLGRYSSGLQMFGKTLKASFRQLGMMAMVVMTGVIFFSTLVYFLEKDEPASKFHSIPAACWWCIVTMTTVGYGDLTPVTVPGKLVATGAIACGVLVLALPITIIVDNFMKVAETERPAGGNRYRTSQYPKATKSEQMILKVT.

Over 1–231 the chain is Cytoplasmic; sequence MNSAIMQGAA…EPASSGKAQA (231 aa). The Required for dendritic localization signature appears at 217–219; the sequence is WNI. A helical transmembrane segment spans residues 232-252; it reads FAVCSVVFVLISISGLVLGSL. Over 253–275 the chain is Extracellular; sequence PELQVATKQRNNLTGEEFTEMEP. Residue N264 is glycosylated (N-linked (GlcNAc...) asparagine). Residues 276-296 traverse the membrane as a helical segment; the sequence is MPILGYIEYVCIVWFTMEYGL. Residues 297 to 313 lie on the Cytoplasmic side of the membrane; the sequence is KMLVSAERSKTFRQLLN. The helical transmembrane segment at 314–334 threads the bilayer; that stretch reads IIDLLAILPFIIEMLLLIFGI. The Extracellular portion of the chain corresponds to 335–346; that stretch reads STEQLRDLKGAF. A helical; Voltage-sensor transmembrane segment spans residues 347–366; it reads LVIRILRVLRVIRVLKLGRY. Residues 367–383 lie on the Cytoplasmic side of the membrane; sequence SSGLQMFGKTLKASFRQ. An S4-S5 linker region spans residues 368 to 383; sequence SGLQMFGKTLKASFRQ. The chain crosses the membrane as a helical span at residues 384–404; the sequence is LGMMAMVVMTGVIFFSTLVYF. At 405–417 the chain is on the extracellular side; it reads LEKDEPASKFHSI. An intramembrane region (helical) is located at residues 418–429; that stretch reads PAACWWCIVTMT. Residues 430–434 lie within the membrane without spanning it; the sequence is TVGYG. The short motif at 430–435 is the Selectivity filter element; it reads TVGYGD. At 435 to 445 the chain is on the extracellular side; sequence DLTPVTVPGKL. A helical transmembrane segment spans residues 446–466; sequence VATGAIACGVLVLALPITIIV. Residues 467 to 503 lie on the Cytoplasmic side of the membrane; sequence DNFMKVAETERPAGGNRYRTSQYPKATKSEQMILKVT. The short motif at 496–500 is the Required for dendritic localization element; sequence EQMIL.

The protein belongs to the potassium channel family. B (Shab) (TC 1.A.1.2) subfamily. Kv2.2/KCNB2 sub-subfamily. Homotetramer or heterotetramer. Interacts with unc-101 (via N-terminus); which targets kvs-4 to dendrites. Expressed in the cholinergic motor neuron DA9, mechanosensory neurons ALM and PLM, and the interneuron PVPL.

It is found in the cell membrane. The protein localises to the perikaryon. The protein resides in the cell projection. It localises to the axon. Its subcellular location is the dendrite. In terms of biological role, voltage-gated potassium channel that mediates transmembrane potassium transport in excitable membranes. The polypeptide is Probable voltage-gated potassium channel subunit kvs-4 (Caenorhabditis elegans).